A 124-amino-acid chain; its full sequence is Trophoblast-specific protein alpha (124 aa).

A signal peptide spans 1 to 18 (MTPTIFLVILCLGVASAV). Disordered stretches follow at residues 51–74 (KLHS…SGQL) and 91–124 (FEEE…NQPQ). Residues 62 to 74 (EGSNIEMSASGQL) show a composition bias toward polar residues. Residues 103–112 (DDPEFEDYTE) are compositionally biased toward acidic residues.

The protein localises to the secreted. It localises to the extracellular space. In terms of biological role, it may be a growth factor/hormone, perhaps involved in interaction between the maternal and fetal systems in maintenance of pregnancy. The protein is Trophoblast-specific protein alpha (Tpbpa) of Mus musculus (Mouse).